The following is a 67-amino-acid chain: Large ribosomal subunit protein bL35 (67 aa).

Basic residues predominate over residues 1-32 (MPKLKNHSGAKKRFAKTATGKYKRRKAGRKHL). The segment at 1 to 54 (MPKLKNHSGAKKRFAKTATGKYKRRKAGRKHLLTPQSGSRKREMRQTGIIKPES) is disordered.

It belongs to the bacterial ribosomal protein bL35 family.

In Elusimicrobium minutum (strain Pei191), this protein is Large ribosomal subunit protein bL35.